The chain runs to 270 residues: Coiled-coil domain-containing protein 3 (270 aa).

An N-terminal signal peptide occupies residues 1-21 (MLRQLLLAALCLAGPPAPARA). The N-linked (GlcNAc...) asparagine glycan is linked to asparagine 100. Residues 188–251 (SVQKALFEEE…NQKLSEKLAA (64 aa)) adopt a coiled-coil conformation.

Homodimer. In terms of tissue distribution, expressed in umbilical vein endothelial cells (HUVEC), and at lower levels in aortic smooth muscle cells (HASMC).

Its subcellular location is the secreted. Its function is as follows. Negatively regulates TNF-alpha-induced pro-inflammatory response in endothelial cells (ECs) via inhibition of TNF-alpha-induced NF-kappaB activation in ECs. Positively regulates lipid accumulation in adipose cells. The protein is Coiled-coil domain-containing protein 3 (CCDC3) of Homo sapiens (Human).